Reading from the N-terminus, the 145-residue chain is 3-dehydroquinate dehydratase (145 aa).

The Proton acceptor role is filled by Tyr-23. Asn-73, His-79, and Asp-86 together coordinate substrate. His-99 acts as the Proton donor in catalysis. Substrate is bound by residues 100–101 and Arg-110; that span reads LS.

Belongs to the type-II 3-dehydroquinase family. As to quaternary structure, homododecamer.

The catalysed reaction is 3-dehydroquinate = 3-dehydroshikimate + H2O. Its pathway is metabolic intermediate biosynthesis; chorismate biosynthesis; chorismate from D-erythrose 4-phosphate and phosphoenolpyruvate: step 3/7. Its function is as follows. Catalyzes a trans-dehydration via an enolate intermediate. The chain is 3-dehydroquinate dehydratase from Desulfitobacterium hafniense (strain DSM 10664 / DCB-2).